The sequence spans 376 residues: N6-methyladenosine RNA methyltransferase MTA1 (376 aa).

Residues 53–78 (TRRLISSPPPETPFVTPEPKNGPSPL) are disordered.

This sequence belongs to the MT-A70-like family.

It catalyses the reaction an adenosine in mRNA + S-adenosyl-L-methionine = an N(6)-methyladenosine in mRNA + S-adenosyl-L-homocysteine + H(+). N6-methyladenosine RNA methyltransferase that plays a crucial role in fungal phenotypic traits, virulence, and stress tolerance. Mediates the methylation of mRNAs to produce N6-methyladenosine (m6A)-containing mRNAs. M6A is a modification present at internal sites of mRNAs and some non-coding RNAs and plays a role in mRNA stability and processing. Required for appressorium turgor pressure and regulates autophagosome formation during appressorium formation stage. Specifically, mediates the stability of ATG8 mRNA in a m6A-dependent manner via modification of the m6A site A982 located in 3'UTR region. The protein is N6-methyladenosine RNA methyltransferase MTA1 of Pyricularia oryzae (strain 70-15 / ATCC MYA-4617 / FGSC 8958) (Rice blast fungus).